The chain runs to 156 residues: Baculoviral IAP repeat-containing protein 5.2 (156 aa).

The BIR repeat unit spans residues 30–100; the sequence is RLSTFANWPF…KHSPSCLFIA (71 aa). A Phosphothreonine; by CDK1 modification is found at Thr46. The Zn(2+) site is built by Cys69, Cys72, His89, and Cys96.

Belongs to the IAP family. As to quaternary structure, component of the CPC at least composed of survivin/birc5, incenp, cdca8/borealin and/or cdca9/dasra-A, and aurkb/aurora-B. Interacts directly with incenp (via N-terminus). Interacts with rxra; the interaction is stronger in the absence of 9-cis retinoic acids. Post-translationally, ubiquitination is required for centrosome-targeting.

The protein localises to the cytoplasm. The protein resides in the nucleus. It is found in the chromosome. Its subcellular location is the centromere. It localises to the cytoskeleton. The protein localises to the spindle. In terms of biological role, component of the chromosomal passenger complex (CPC), a complex that acts as a key regulator of mitosis. The CPC complex has essential functions at the centromere in ensuring correct chromosome alignment and segregation and is required for chromatin-induced microtubule stabilization and spindle assembly. Does not appear to exhibit anti-apoptotic activity. Plays a role in increasing blood vessel size during development. This is Baculoviral IAP repeat-containing protein 5.2 (birc5.2) from Xenopus tropicalis (Western clawed frog).